We begin with the raw amino-acid sequence, 195 residues long: Holliday junction branch migration complex subunit RuvA (195 aa).

Residues 1–63 (MIASVRGEVL…EDSQTLYGFA (63 aa)) are domain I. The tract at residues 64–138 (DSDARDLFLT…DKVGSSTSSG (75 aa)) is domain II. Residues 138 to 142 (GVAAA) are flexible linker. Positions 143-195 (GGHGIRGPVVEALVGLGFAVKQAEEATDKVLANDPEATTSSALRAALSMLGKK) are domain III.

Belongs to the RuvA family. As to quaternary structure, homotetramer. Forms an RuvA(8)-RuvB(12)-Holliday junction (HJ) complex. HJ DNA is sandwiched between 2 RuvA tetramers; dsDNA enters through RuvA and exits via RuvB. An RuvB hexamer assembles on each DNA strand where it exits the tetramer. Each RuvB hexamer is contacted by two RuvA subunits (via domain III) on 2 adjacent RuvB subunits; this complex drives branch migration. In the full resolvosome a probable DNA-RuvA(4)-RuvB(12)-RuvC(2) complex forms which resolves the HJ.

Its subcellular location is the cytoplasm. The RuvA-RuvB-RuvC complex processes Holliday junction (HJ) DNA during genetic recombination and DNA repair, while the RuvA-RuvB complex plays an important role in the rescue of blocked DNA replication forks via replication fork reversal (RFR). RuvA specifically binds to HJ cruciform DNA, conferring on it an open structure. The RuvB hexamer acts as an ATP-dependent pump, pulling dsDNA into and through the RuvAB complex. HJ branch migration allows RuvC to scan DNA until it finds its consensus sequence, where it cleaves and resolves the cruciform DNA. This chain is Holliday junction branch migration complex subunit RuvA, found in Mycolicibacterium gilvum (strain PYR-GCK) (Mycobacterium gilvum (strain PYR-GCK)).